The chain runs to 181 residues: MTVHHFTFHITDKSDASDIREVETRAFGFSKEADLVASLLEDESARPALSLLARYEGKAVGHILFTRATFKGEMDSPLMHILAPLAVIPEYQGMGVGGRLIRTGIEHLRLMGCQTVFVLGHATYYPRHGFEPCAGDKGYPAPYPIPEEHKACWMMQSLTAQPMTLTGHIRCADPDETGALT.

The 159-residue stretch at 1–159 (MTVHHFTFHI…KACWMMQSLT (159 aa)) folds into the N-acetyltransferase domain.

Belongs to the acetyltransferase family.

This is an uncharacterized protein from Escherichia coli (strain K12).